Reading from the N-terminus, the 199-residue chain is Putative acetyltransferase SAV2555 (199 aa).

It belongs to the transferase hexapeptide repeat family.

The protein is Putative acetyltransferase SAV2555 of Staphylococcus aureus (strain Mu50 / ATCC 700699).